The following is a 249-amino-acid chain: tRNA (guanine-N(1)-)-methyltransferase (249 aa).

S-adenosyl-L-methionine contacts are provided by residues Gly-113 and 133-138 (IGDFVL).

The protein belongs to the RNA methyltransferase TrmD family. Homodimer.

It is found in the cytoplasm. It catalyses the reaction guanosine(37) in tRNA + S-adenosyl-L-methionine = N(1)-methylguanosine(37) in tRNA + S-adenosyl-L-homocysteine + H(+). Specifically methylates guanosine-37 in various tRNAs. The polypeptide is tRNA (guanine-N(1)-)-methyltransferase (Aliivibrio fischeri (strain ATCC 700601 / ES114) (Vibrio fischeri)).